A 489-amino-acid chain; its full sequence is uncharacterized protein (489 aa).

This is an uncharacterized protein from Bacillus subtilis (strain 168).